Here is a 170-residue protein sequence, read N- to C-terminus: Photosystem I assembly protein Ycf3 (170 aa).

TPR repeat units follow at residues 35-69 (AFTYYRDGVMSAQSEGEYAEALQNYYEAMRPEIDP), 73-106 (SYILYNIGLIHMSNGEHTEALEYYFQALKRNPSL), and 121-154 (GEQAIRQGDPETAEAWSDRAAEYWKQAIALAPGN).

Belongs to the Ycf3 family.

The protein localises to the plastid. It localises to the chloroplast thylakoid membrane. Functionally, essential for the assembly of the photosystem I (PSI) complex. May act as a chaperone-like factor to guide the assembly of the PSI subunits. The polypeptide is Photosystem I assembly protein Ycf3 (Cycas taitungensis (Prince sago)).